A 656-amino-acid chain; its full sequence is Protein NO VEIN-LIKE (656 aa).

Residues 283–375 are disordered; sequence DKDYCGKHTR…HVKQKIPKSA (93 aa). A compositionally biased stretch (acidic residues) spans 299–308; that stretch reads EENDSADYEV. Basic and acidic residues predominate over residues 342–353; that stretch reads ESRNHEKSDSPK. Over residues 354 to 371 the composition is skewed to basic residues; the sequence is LLRRGPSKLRRGHVKQKI.

This Arabidopsis thaliana (Mouse-ear cress) protein is Protein NO VEIN-LIKE.